A 525-amino-acid chain; its full sequence is MALERLCSVLKVLLITVLVVEGIAVAQKTQDGQNIGIKHIPATQCGIWVRTSNGGHFASPNYPDSYPPNKECIYILEAAPRQRIELTFDEHYYIEPSFECRFDHLEVRDGPFGFSPLIDRYCGVKSPPLIRSTGRFMWIKFSSDEELEGLGFRAKYSFIPDPDFTYLGGILNPIPDCQFELSGADGIVRSSQVEQEEKTKPGQAVDCIWTIKATPKAKIYLRFLDYQMEHSNECKRNFVAVYDGSSSIENLKAKFCSTVANDVMLKTGIGVIRMWADEGSRLSRFRMLFTSFVEPPCTSSTFFCHSNMCINNSLVCNGVQNCAYPWDENHCKEKKKAGVFEQITKTHGTIIGITSGIVLVLLIISILVQVKQPRKKVMACKTAFNKTGFQEVFDPPHYELFSLRDKEISADLADLSEELDNYQKMRRSSTASRCIHDHHCGSQASSVKQSRTNLSSMELPFRNDFAQPQPMKTFNSTFKKSSYTFKQGHECPEQALEDRVMEEIPCEIYVRGREDSAQASISIDF.

The N-terminal stretch at 1-22 (MALERLCSVLKVLLITVLVVEG) is a signal peptide. At 23 to 347 (IAVAQKTQDG…GVFEQITKTH (325 aa)) the chain is on the extracellular side. Disulfide bonds link Cys-45–Cys-72, Cys-100–Cys-122, Cys-177–Cys-207, Cys-234–Cys-256, Cys-297–Cys-309, Cys-304–Cys-322, and Cys-316–Cys-331. 2 CUB domains span residues 45 to 159 (CGIW…YSFI) and 177 to 292 (CQFE…FTSF). Positions 296–332 (PCTSSTFFCHSNMCINNSLVCNGVQNCAYPWDENHCK) constitute an LDL-receptor class A domain. Asn-311 carries N-linked (GlcNAc...) asparagine glycosylation. Residues 348-368 (GTIIGITSGIVLVLLIISILV) form a helical membrane-spanning segment. Over 369–525 (QVKQPRKKVM…SAQASISIDF (157 aa)) the chain is Cytoplasmic. Ser-409 is modified (phosphoserine).

In terms of assembly, interacts with GRIK2 and GRIK3, but neither with AMPA-nor with NMDA-sensitive glutamate receptors. Post-translationally, N-glycosylated.

The protein resides in the membrane. Accessory subunit of neuronal kainate-sensitive glutamate receptors, GRIK2 and GRIK3. Increases kainate-receptor channel activity, slowing the decay kinetics of the receptors, without affecting their expression at the cell surface, and increasing the open probability of the receptor channels. Modulates the agonist sensitivity of kainate receptors. Slows the decay of kainate receptor-mediated excitatory postsynaptic currents (EPSCs), thus directly influencing synaptic transmission. This is Neuropilin and tolloid-like protein 2 (NETO2) from Homo sapiens (Human).